Here is a 130-residue protein sequence, read N- to C-terminus: Small ribosomal subunit protein uS11 (130 aa).

This sequence belongs to the universal ribosomal protein uS11 family. In terms of assembly, part of the 30S ribosomal subunit. Interacts with proteins S7 and S18. Binds to IF-3.

Its function is as follows. Located on the platform of the 30S subunit, it bridges several disparate RNA helices of the 16S rRNA. Forms part of the Shine-Dalgarno cleft in the 70S ribosome. This chain is Small ribosomal subunit protein uS11, found in Shewanella halifaxensis (strain HAW-EB4).